The chain runs to 306 residues: Dirigent protein 24 (306 aa).

Positions 1 to 21 (MAKALSLTIFLFLLIASNVQS) are cleaved as a signal peptide. Positions 36 to 61 (PQVPEEEDDSPQAVTTTPTPIPLPGP) are disordered.

It belongs to the plant dirigent protein family. Homodimer.

It localises to the secreted. Its subcellular location is the extracellular space. The protein localises to the apoplast. Dirigent proteins impart stereoselectivity on the phenoxy radical-coupling reaction, yielding optically active lignans from two molecules of coniferyl alcohol in the biosynthesis of lignans, flavonolignans, and alkaloids and thus plays a central role in plant secondary metabolism. The protein is Dirigent protein 24 (DIR24) of Arabidopsis thaliana (Mouse-ear cress).